The primary structure comprises 340 residues: Dual specificity protein phosphatase 12 (340 aa).

N-acetylmethionine is present on M1. Residues 26–171 enclose the Tyrosine-protein phosphatase domain; the sequence is QMLEVQPGLY…LKLYQAMGYE (146 aa). The Phosphocysteine intermediate role is filled by C115. 116–121 contributes to the substrate binding site; the sequence is HAGVSR. S335 is subject to Phosphoserine.

This sequence belongs to the protein-tyrosine phosphatase family. Non-receptor class dual specificity subfamily. Monomer. Requires Zn(2+) as cofactor. As to expression, ubiquitous, highest expression in spleen, testis, ovary, and peripheral blood leukocytes and lower expression in liver and lung.

It localises to the nucleus. The protein localises to the cytoplasm. The protein resides in the cytosol. It catalyses the reaction O-phospho-L-tyrosyl-[protein] + H2O = L-tyrosyl-[protein] + phosphate. The catalysed reaction is O-phospho-L-seryl-[protein] + H2O = L-seryl-[protein] + phosphate. The enzyme catalyses O-phospho-L-threonyl-[protein] + H2O = L-threonyl-[protein] + phosphate. In terms of biological role, dual specificity phosphatase; can dephosphorylate both phosphotyrosine and phosphoserine or phosphothreonine residues. Can dephosphorylate glucokinase (in vitro). Has phosphatase activity with the synthetic substrate 6,8-difluoro-4-methylumbelliferyl phosphate and other in vitro substrates. The polypeptide is Dual specificity protein phosphatase 12 (DUSP12) (Homo sapiens (Human)).